A 128-amino-acid polypeptide reads, in one-letter code: MGFLKFSPFLVVSILLLYQACGLQAVPLRSTLESSPGMAATLSEEEARLLLAALVQNYMQMKVRELEQEQEAEGSSVTAQKRSCNTATCVTHRLAGLLSRSGGVVKDNFVPTNVGSEAFGRRRRDLQA.

A signal peptide spans 1 to 25 (MGFLKFSPFLVVSILLLYQACGLQA). Positions 26–80 (VPLRSTLESSPGMAATLSEEEARLLLAALVQNYMQMKVRELEQEQEAEGSSVTAQ) are excised as a propeptide. Cys-84 and Cys-89 are disulfide-bonded. A Phenylalanine amide modification is found at Phe-119. The propeptide occupies 125 to 128 (DLQA).

The protein belongs to the calcitonin family.

The protein resides in the secreted. Its function is as follows. CGRP1/CALCA is a peptide hormone that induces vasodilation mediated by the CALCRL-RAMP1 receptor complex. Dilates a variety of vessels including the coronary, cerebral and systemic vasculature. Its abundance in the CNS also points toward a neurotransmitter or neuromodulator role. It also elevates platelet cAMP. CGRP1 can also bind and activate CALCR-RAMP1 (AMYR1) receptor complex. This chain is Calcitonin gene-related peptide 1, found in Rattus norvegicus (Rat).